Reading from the N-terminus, the 144-residue chain is Peptide methionine sulfoxide reductase MsrB (144 aa).

One can recognise a MsrB domain in the interval 6–128 (KDELKKKLTP…NSAALRFIPK (123 aa)). C117 serves as the catalytic Nucleophile.

This sequence belongs to the MsrB Met sulfoxide reductase family.

It carries out the reaction L-methionyl-[protein] + [thioredoxin]-disulfide + H2O = L-methionyl-(R)-S-oxide-[protein] + [thioredoxin]-dithiol. The chain is Peptide methionine sulfoxide reductase MsrB from Shouchella clausii (strain KSM-K16) (Alkalihalobacillus clausii).